We begin with the raw amino-acid sequence, 264 residues long: Glucosamine-6-phosphate deaminase (264 aa).

Catalysis depends on D72, which acts as the Proton acceptor; for enolization step. The For ring-opening step role is filled by D141. Residue H143 is the Proton acceptor; for ring-opening step of the active site. E148 serves as the catalytic For ring-opening step.

This sequence belongs to the glucosamine/galactosamine-6-phosphate isomerase family. NagB subfamily. In terms of assembly, homohexamer.

It carries out the reaction alpha-D-glucosamine 6-phosphate + H2O = beta-D-fructose 6-phosphate + NH4(+). Its pathway is amino-sugar metabolism; N-acetylneuraminate degradation; D-fructose 6-phosphate from N-acetylneuraminate: step 5/5. With respect to regulation, allosterically activated by N-acetylglucosamine 6-phosphate (GlcNAc6P). Catalyzes the reversible isomerization-deamination of glucosamine 6-phosphate (GlcN6P) to form fructose 6-phosphate (Fru6P) and ammonium ion. The sequence is that of Glucosamine-6-phosphate deaminase from Glaesserella parasuis serovar 5 (strain SH0165) (Haemophilus parasuis).